Here is a 103-residue protein sequence, read N- to C-terminus: Large ribosomal subunit protein uL24 (103 aa).

This sequence belongs to the universal ribosomal protein uL24 family. As to quaternary structure, part of the 50S ribosomal subunit.

In terms of biological role, one of two assembly initiator proteins, it binds directly to the 5'-end of the 23S rRNA, where it nucleates assembly of the 50S subunit. Functionally, one of the proteins that surrounds the polypeptide exit tunnel on the outside of the subunit. The sequence is that of Large ribosomal subunit protein uL24 from Endomicrobium trichonymphae.